The sequence spans 137 residues: Profilin-3 (137 aa).

It belongs to the profilin family. As to quaternary structure, interacts with ACTRT3. In terms of tissue distribution, testis specific.

The protein resides in the cytoplasm. It is found in the cytoskeleton. It localises to the nucleus. Functionally, binds to actin and affects the structure of the cytoskeleton. Slightly reduces actin polymerization. Binds to poly-L-proline, phosphatidylinositol 3-phosphate (PtdIns(3)P), phosphatidylinositol 4,5-bisphosphate (PtdIns(4,5)P2) and phosphatidylinositol 4-phosphate (PtdIns(4)P). May be involved in spermatogenesis. This chain is Profilin-3 (PFN3), found in Homo sapiens (Human).